A 365-amino-acid polypeptide reads, in one-letter code: Inositol 4-methyltransferase (365 aa).

S-adenosyl-L-methionine is bound at residue D232. Catalysis depends on H270, which acts as the Proton acceptor.

Belongs to the class I-like SAM-binding methyltransferase superfamily. Cation-independent O-methyltransferase family. In terms of tissue distribution, leaves and roots. The levels found in the leaves are 25 times greater than in the roots.

It catalyses the reaction myo-inositol + S-adenosyl-L-methionine = 1D-4-O-methyl-myo-inositol + S-adenosyl-L-homocysteine + H(+). It functions in the pathway polyol metabolism; myo-inositol metabolism. Catalyzes the methylation of myo-inositol into ononitol (1D-4-O-methyl myo-inositol), the first step in the biosynthesis of the cyclic sugar pinitol which has osmoprotective properties. In Mesembryanthemum crystallinum (Common ice plant), this protein is Inositol 4-methyltransferase (IMT1).